Here is a 156-residue protein sequence, read N- to C-terminus: RING finger protein 224 (156 aa).

An RING-type zinc finger spans residues 23–70; sequence CIICYSAYDLSVHLPRRLYCGHTFCQACMQRLDMPAHEQHWIPCPQCR.

The chain is RING finger protein 224 (Rnf224) from Mus musculus (Mouse).